The primary structure comprises 37 residues: Rugosin-C (37 aa).

Cysteine 31 and cysteine 37 form a disulfide bridge.

It belongs to the frog skin active peptide (FSAP) family. Brevinin subfamily. Expressed by the skin glands.

It is found in the secreted. In terms of biological role, has antibacterial activity against Gram-positive bacteria. The polypeptide is Rugosin-C (Glandirana rugosa (Japanese wrinkled frog)).